A 233-amino-acid chain; its full sequence is Gamma-glutamyl-hercynylcysteine sulfoxide hydrolase (233 aa).

Cys-2 functions as the Nucleophile in the catalytic mechanism. Residues 2–233 (CRHLGWLGAQ…TALDRAKGPR (232 aa)) form the Glutamine amidotransferase type-2 domain.

The catalysed reaction is gamma-L-glutamyl-hercynylcysteine S-oxide + H2O = S-(hercyn-2-yl)-L-cysteine S-oxide + L-glutamate. It functions in the pathway amino-acid biosynthesis; ergothioneine biosynthesis. Functionally, catalyzes the hydrolysis of the gamma-glutamyl amide bond of hercynyl-gamma-L-glutamyl-L-cysteine sulfoxide to produce hercynylcysteine sulfoxide, a step in the biosynthesis pathway of ergothioneine. ERG is one of the major redox buffers which protects bacteria against redox stressors and antibiotics; loss of ERG or mycothiol (MSH, the other major redox buffer in this bacteria) leads to respiratory alterations and bioenergetic deficiencies that negatively impact virulence. This Mycobacterium tuberculosis (strain CDC 1551 / Oshkosh) protein is Gamma-glutamyl-hercynylcysteine sulfoxide hydrolase.